We begin with the raw amino-acid sequence, 422 residues long: Enolase (422 aa).

Position 41 (Ser-41) interacts with Mg(2+). Position 163 (Glu-163) interacts with (2R)-2-phosphoglycerate. The active-site Proton donor is Glu-204. Positions 241, 284, and 311 each coordinate Mg(2+). The Proton acceptor role is filled by Lys-336. (2R)-2-phosphoglycerate-binding residues include Arg-365, Ser-366, and Lys-387.

Belongs to the enolase family. Homodimer. Component of the RNA degradosome, a multiprotein complex involved in RNA processing and mRNA degradation. The cofactor is Mg(2+).

The protein resides in the cytoplasm. Its subcellular location is the secreted. The protein localises to the cell surface. The catalysed reaction is (2R)-2-phosphoglycerate = phosphoenolpyruvate + H2O. It functions in the pathway carbohydrate degradation; glycolysis; pyruvate from D-glyceraldehyde 3-phosphate: step 4/5. In terms of biological role, catalyzes the reversible conversion of 2-phosphoglycerate (2-PG) into phosphoenolpyruvate (PEP). It is essential for the degradation of carbohydrates via glycolysis. This is Enolase from Legionella pneumophila subsp. pneumophila (strain Philadelphia 1 / ATCC 33152 / DSM 7513).